The chain runs to 118 residues: Small ribosomal subunit protein uS13 (118 aa).

Residues 93 to 118 (RGLPVRGQRTKTNARTRKGPRKPIRK) form a disordered region.

The protein belongs to the universal ribosomal protein uS13 family. Part of the 30S ribosomal subunit. Forms a loose heterodimer with protein S19. Forms two bridges to the 50S subunit in the 70S ribosome.

Functionally, located at the top of the head of the 30S subunit, it contacts several helices of the 16S rRNA. In the 70S ribosome it contacts the 23S rRNA (bridge B1a) and protein L5 of the 50S subunit (bridge B1b), connecting the 2 subunits; these bridges are implicated in subunit movement. Contacts the tRNAs in the A and P-sites. The chain is Small ribosomal subunit protein uS13 from Pseudomonas fluorescens (strain ATCC BAA-477 / NRRL B-23932 / Pf-5).